The primary structure comprises 467 residues: Glycosyl hydrolase family 109 protein (467 aa).

The segment at residues Met1–Ala31 is a signal peptide (tat-type signal). NAD(+) is bound by residues Gln66–Arg67, Asp88, Trp137–His140, Glu157–Val158, and Asn186. Residues Tyr215, Arg234, Tyr246–His249, and Tyr328 contribute to the substrate site. Tyr246 contacts NAD(+).

It belongs to the Gfo/Idh/MocA family. Glycosyl hydrolase 109 subfamily. The cofactor is NAD(+). Predicted to be exported by the Tat system. The position of the signal peptide cleavage has not been experimentally proven.

Functionally, glycosidase. The protein is Glycosyl hydrolase family 109 protein of Shewanella woodyi (strain ATCC 51908 / MS32).